Consider the following 365-residue polypeptide: c-di-GMP synthase (365 aa).

The protein belongs to the CD-NTase family. E subfamily.

The catalysed reaction is 2 GTP = 3',3'-c-di-GMP + 2 diphosphate. Cyclic nucleotide synthase (second messenger synthase) of a CBASS antivirus system. CBASS (cyclic oligonucleotide-based antiphage signaling system) provides immunity against bacteriophage. The CD-NTase protein synthesizes cyclic nucleotides in response to infection; these serve as specific second messenger signals. The signals activate a diverse range of effectors, leading to bacterial cell death and thus abortive phage infection. A type I-D(GG) CBASS system. Its function is as follows. Cyclic dinucleotide synthase that catalyzes the synthesis of c-di-GMP, has no activity with other NTP substrates. The chain is c-di-GMP synthase from Flavobacteriaceae sp. genome_bin_11.